A 490-amino-acid chain; its full sequence is Betaine aldehyde dehydrogenase (490 aa).

T26, I27, and D93 together coordinate K(+). 150-152 (GAW) is a binding site for NAD(+). K162 serves as the catalytic Charge relay system. Position 176-179 (176-179 (KPSE)) interacts with NAD(+). V180 provides a ligand contact to K(+). 230–233 (GVAS) provides a ligand contact to NAD(+). L246 lines the K(+) pocket. Catalysis depends on E252, which acts as the Proton acceptor. NAD(+)-binding residues include G254, C286, and E387. C286 acts as the Nucleophile in catalysis. The residue at position 286 (C286) is a Cysteine sulfenic acid (-SOH). K(+)-binding residues include K457 and G460. The active-site Charge relay system is E464.

The protein belongs to the aldehyde dehydrogenase family. As to quaternary structure, dimer of dimers. K(+) serves as cofactor.

It carries out the reaction betaine aldehyde + NAD(+) + H2O = glycine betaine + NADH + 2 H(+). It participates in amine and polyamine biosynthesis; betaine biosynthesis via choline pathway; betaine from betaine aldehyde: step 1/1. Functionally, involved in the biosynthesis of the osmoprotectant glycine betaine. Catalyzes the irreversible oxidation of betaine aldehyde to the corresponding acid. This is Betaine aldehyde dehydrogenase from Escherichia coli O139:H28 (strain E24377A / ETEC).